We begin with the raw amino-acid sequence, 999 residues long: Hypoxia up-regulated protein 1 (999 aa).

An N-terminal signal peptide occupies residues 1–32 (MAATVRRQRPRRLLCWALVAVLLADLLALSDT). 3 N-linked (GlcNAc...) asparagine glycosylation sites follow: asparagine 155, asparagine 222, and asparagine 515. A disordered region spans residues 564–694 (VEDSPEEEST…KKQKPARKQK (131 aa)). Serine 567 is subject to Phosphoserine. Over residues 574–583 (LTKLGNTISS) the composition is skewed to polar residues. Asparagine 596 carries N-linked (GlcNAc...) asparagine glycosylation. Composition is skewed to basic and acidic residues over residues 611-626 (GSKD…KEEA) and 641-668 (PKGD…KPNE). N-linked (GlcNAc...) asparagine glycosylation is found at asparagine 830, asparagine 862, and asparagine 869. Position 883 is an N6-acetyllysine (lysine 883). Residues 909 to 999 (AKFTKPRPRP…QKRPLKNDEL (91 aa)) are disordered. N-linked (GlcNAc...) asparagine glycans are attached at residues asparagine 922 and asparagine 931. The segment covering 949–962 (EEAKAILEPDKEGL) has biased composition (basic and acidic residues). Residues 996–999 (NDEL) carry the Prevents secretion from ER motif.

This sequence belongs to the heat shock protein 70 family. Part of a large chaperone multiprotein complex comprising DNAJB11, HSP90B1, HSPA5, HYOU, PDIA2, PDIA4, PDIA6, PPIB, SDF2L1, UGGT1 and very small amounts of ERP29, but not, or at very low levels, CALR nor CANX. In terms of tissue distribution, selectively expressed by cultured astrocytes but not endothelial cells, microglia or neurons.

The protein resides in the endoplasmic reticulum lumen. Functionally, has a pivotal role in cytoprotective cellular mechanisms triggered by oxygen deprivation. Promotes HSPA5/BiP-mediated ATP nucleotide exchange and thereby activates the unfolded protein response (UPR) pathway in the presence of endoplasmic reticulum stress. May play a role as a molecular chaperone and participate in protein folding. The polypeptide is Hypoxia up-regulated protein 1 (Hyou1) (Rattus norvegicus (Rat)).